The following is a 138-amino-acid chain: MGIVRFGVSIPKELLEKFDGIIEEMGYTNRSEAIRDLIRDMVVRHEWQLGDEEVAGTITIVYNHDEADVVRELLDLQHEYLNEIVSSLHVHMDEHNCLEVIVVKGRAKKIKKIADRLLSLKGVKHGKLVMTTTGRDIV.

Ni(2+)-binding residues include His78, His89, His91, and Cys97.

This sequence belongs to the transcriptional regulatory CopG/NikR family. Ni(2+) serves as cofactor.

Its function is as follows. Transcriptional regulator. The polypeptide is Putative nickel-responsive regulator (Pyrococcus furiosus (strain ATCC 43587 / DSM 3638 / JCM 8422 / Vc1)).